Reading from the N-terminus, the 255-residue chain is Hydroxyacylglutathione hydrolase (255 aa).

Residues His53, His55, Asp57, His58, His110, Asp127, and His165 each contribute to the Zn(2+) site.

The protein belongs to the metallo-beta-lactamase superfamily. Glyoxalase II family. Monomer. The cofactor is Zn(2+).

It carries out the reaction an S-(2-hydroxyacyl)glutathione + H2O = a 2-hydroxy carboxylate + glutathione + H(+). The protein operates within secondary metabolite metabolism; methylglyoxal degradation; (R)-lactate from methylglyoxal: step 2/2. Its function is as follows. Thiolesterase that catalyzes the hydrolysis of S-D-lactoyl-glutathione to form glutathione and D-lactic acid. This is Hydroxyacylglutathione hydrolase from Xanthomonas euvesicatoria pv. vesicatoria (strain 85-10) (Xanthomonas campestris pv. vesicatoria).